Reading from the N-terminus, the 139-residue chain is Cytochrome c-type biogenesis protein CcmE 2 (139 aa).

Topologically, residues Met1–Arg9 are cytoplasmic. The chain crosses the membrane as a helical; Signal-anchor for type II membrane protein span at residues Val10–Ala30. Residues Met31 to Asp139 lie on the Periplasmic side of the membrane. Residues His122 and Tyr126 each contribute to the heme site.

Belongs to the CcmE/CycJ family.

It is found in the cell inner membrane. Functionally, heme chaperone required for the biogenesis of c-type cytochromes. Transiently binds heme delivered by CcmC and transfers the heme to apo-cytochromes in a process facilitated by CcmF and CcmH. This chain is Cytochrome c-type biogenesis protein CcmE 2, found in Ruegeria pomeroyi (strain ATCC 700808 / DSM 15171 / DSS-3) (Silicibacter pomeroyi).